The following is a 279-amino-acid chain: MSDQPVSQTAPPLYIVSGGAGAVGEQVARLTLSQFEGAEVPLIIIPNVRDLSQIAEVVERAAHQNGTILHTLMEPSLRRELMRLARERGVAEIDLVGSVLSRLATVLRKEPLGKPGLYQPRRSAYFERLDAIEYTVAHDDGNKPHELHQADIVLVGISRVGKTPLSMYLAVLGWKVANVPLVREVPLPAELFQVDPRRVIGLIVEAEQITARRRWRQRRMGVSIGGNYTSLDAAYDEVEWARRTFRQHGWTTINVTDKSIEESADEIITLISRRFSQLP.

Position 156-163 (156-163 (GISRVGKT)) interacts with ADP.

It belongs to the pyruvate, phosphate/water dikinase regulatory protein family. PDRP subfamily.

It carries out the reaction N(tele)-phospho-L-histidyl/L-threonyl-[pyruvate, phosphate dikinase] + ADP = N(tele)-phospho-L-histidyl/O-phospho-L-threonyl-[pyruvate, phosphate dikinase] + AMP + H(+). It catalyses the reaction N(tele)-phospho-L-histidyl/O-phospho-L-threonyl-[pyruvate, phosphate dikinase] + phosphate + H(+) = N(tele)-phospho-L-histidyl/L-threonyl-[pyruvate, phosphate dikinase] + diphosphate. Functionally, bifunctional serine/threonine kinase and phosphorylase involved in the regulation of the pyruvate, phosphate dikinase (PPDK) by catalyzing its phosphorylation/dephosphorylation. The polypeptide is Putative pyruvate, phosphate dikinase regulatory protein (Chloroflexus aurantiacus (strain ATCC 29366 / DSM 635 / J-10-fl)).